The primary structure comprises 320 residues: Ribosomal RNA small subunit methyltransferase H (320 aa).

S-adenosyl-L-methionine-binding positions include glycine 42 to histidine 44, aspartate 62, phenylalanine 86, aspartate 108, and glutamine 115.

This sequence belongs to the methyltransferase superfamily. RsmH family.

The protein resides in the cytoplasm. It catalyses the reaction cytidine(1402) in 16S rRNA + S-adenosyl-L-methionine = N(4)-methylcytidine(1402) in 16S rRNA + S-adenosyl-L-homocysteine + H(+). Its function is as follows. Specifically methylates the N4 position of cytidine in position 1402 (C1402) of 16S rRNA. This chain is Ribosomal RNA small subunit methyltransferase H, found in Yersinia pseudotuberculosis serotype O:1b (strain IP 31758).